We begin with the raw amino-acid sequence, 631 residues long: MSLIHKGATLALFLALTMVVNGVFGRFIVEKSSVTILNPLAMRSKHDAAIANFGVPNYGGYMIGSVVYAGQGAYGCDSFDKTFKPKFPRPTILIIDRGECYFALKVWNGQQSGVAAVLVADNVDEPLITMDSPEESKEADDFIEKLNIPSALIDFSFANTLKQALKKGEEVVLKIDWSESLPHPDERVEYELWTNTNDECGARCDEQMNFVKNFKGHAQILEKGGYSLFTPHYITWFCPKDYVSSNQCKSQCINQGRYCAPDPEQDFGDGYDGKDIVFENLRQLCVHKVAKENNRSWVWWDYVTDFHIRCSMKEKKYSKECAERVVESLGLPLDKIKKCIGDPDANVENEVLKAEQALQVGQGDRGDVTILPTLIVNNAQYRGKLERNAVLKAICSGFKERTEPGICLSGDIETNECLEANGGCWEDKKSNVTACKDTFRGRVCECPVVNGVQYKGDGYTSCEPYGPARCSINQGGCWSETKKGLTFSACSNLETSGCRCPPGFKGDGLKCEDIDECKEQSACQCDGCNCKNKWGGFECKCSGNRLYMKEQDTCIERSGSRIGWFPTFVILAAVASICVGGYVFYKYRLRSYMDSEIMAIMSQYMPLESQNTTDPMTGESQHQQLRLTSAA.

Residues 1–25 (MSLIHKGATLALFLALTMVVNGVFG) form the signal peptide. Over 26–563 (RFIVEKSSVT…CIERSGSRIG (538 aa)) the chain is Lumenal. Residues 57–165 (NYGGYMIGSV…SFANTLKQAL (109 aa)) enclose the PA domain. 2 N-linked (GlcNAc...) asparagine glycosylation sites follow: asparagine 294 and asparagine 431. EGF-like domains follow at residues 413 to 463 (ETNE…TSCE) and 494 to 540 (ETSG…FECK). 5 disulfide bridges follow: cysteine 417-cysteine 435, cysteine 424-cysteine 444, cysteine 446-cysteine 462, cysteine 498-cysteine 511, and cysteine 530-cysteine 539. Residues 564-584 (WFPTFVILAAVASICVGGYVF) traverse the membrane as a helical segment. Residues 585–631 (YKYRLRSYMDSEIMAIMSQYMPLESQNTTDPMTGESQHQQLRLTSAA) are Cytoplasmic-facing. The Tyrosine-based internalization motif motif lies at 604-607 (YMPL). The tract at residues 610–631 (QNTTDPMTGESQHQQLRLTSAA) is disordered.

The protein belongs to the VSR (BP-80) family. As to expression, expressed in seedlings, roots, leaves, flowers and siliques.

The protein resides in the membrane. The protein localises to the golgi apparatus membrane. It is found in the cytoplasmic vesicle. It localises to the clathrin-coated vesicle membrane. Its subcellular location is the prevacuolar compartment membrane. Its function is as follows. Vacuolar-sorting receptor (VSR) involved in clathrin-coated vesicles sorting from Golgi apparatus to vacuoles. This is Vacuolar-sorting receptor 6 (VSR6) from Arabidopsis thaliana (Mouse-ear cress).